A 115-amino-acid polypeptide reads, in one-letter code: Kunitz-type trypsin inhibitor 1 (115 aa).

Belongs to the protease inhibitor I3 (leguminous Kunitz-type inhibitor) family.

Functionally, exhibits Kunitz trypsin protease inhibitor activity. The sequence is that of Kunitz-type trypsin inhibitor 1 from Selenicereus undatus (Pitahaya).